A 223-amino-acid chain; its full sequence is UPF0441 protein YgiB (223 aa).

Residues 178–195 (TVPKTAMAPKPATTTTVT) show a composition bias toward low complexity. A disordered region spans residues 178–223 (TVPKTAMAPKPATTTTVTRGGFGESVAKQSTMQRSAAGTSTRSMGG). The span at 204–223 (AKQSTMQRSAAGTSTRSMGG) shows a compositional bias: polar residues.

The protein belongs to the UPF0441 family.

The chain is UPF0441 protein YgiB from Salmonella paratyphi B (strain ATCC BAA-1250 / SPB7).